Consider the following 477-residue polypeptide: Cysteine--tRNA ligase (477 aa).

Cys-29 is a Zn(2+) binding site. The 'HIGH' region motif lies at 31 to 41; that stretch reads PTVYDFAHIGN. Residues Cys-224, His-249, and Glu-253 each coordinate Zn(2+). A 'KMSKS' region motif is present at residues 282 to 286; that stretch reads KMSKS. Lys-285 provides a ligand contact to ATP.

The protein belongs to the class-I aminoacyl-tRNA synthetase family. As to quaternary structure, monomer. Zn(2+) is required as a cofactor.

It localises to the cytoplasm. It catalyses the reaction tRNA(Cys) + L-cysteine + ATP = L-cysteinyl-tRNA(Cys) + AMP + diphosphate. This is Cysteine--tRNA ligase from Nitrobacter winogradskyi (strain ATCC 25391 / DSM 10237 / CIP 104748 / NCIMB 11846 / Nb-255).